We begin with the raw amino-acid sequence, 623 residues long: METVGRFQAGDYVVFACLFVVSSGIGVFFAIKERNKAPSKEFLVGGRQMSCGPVALSLTASFMSAVTVIGAPADVYRFGASYVIFGVAYTFVVFFTAELFLPVFYRSGITSTYEYLELRFCKLVRVAATLIYIIQTILYTGVVVYAPALALNQVTGFDLWGSIFATGIVCTFYCTLGGLKAVVWTDAFQMVVMVVGFLTVLIQGSSRAGGIENVWSTSRTGGRLQVFDFDVSPLRRHTFWTLSVGGTFTWLGIYGVNQSTIQRCISCKTEGHARWALYLNLLGLWIILFCAVVSGLIMYSYYSHCDPWSSGLISAPDQLMPYFVMEILGAFPGLPGLFVACAFSGTLSTVAASINALATVMYEDFVSQCFPDLSNRAASWISKALCVAFGVACTTMAVAASYMGGIVQAALSIHGMCGGPVLGLFSLGILFPFTNLKGAVGGLIVGISLSFWVGVGAFIYPAPSNNTHALELNTAGCNITAAAFEPTSATVTQLTSDRNWLADSWYSMSYLYYSAVGFIGTVAAGLLITLLTGPMDPKLLKPGMTRSVKEVMCFCTEKFTEADLGEGKEDVGDFGKAWEKHPDQGCTLRMDEKFRCSCDNQQENGNTNAGFDHNETSIVQKKL.

The Extracellular segment spans residues 1–10 (METVGRFQAG). Residues 11–31 (DYVVFACLFVVSSGIGVFFAI) traverse the membrane as a helical segment. Residues 32 to 50 (KERNKAPSKEFLVGGRQMS) are Cytoplasmic-facing. Residues 51–71 (CGPVALSLTASFMSAVTVIGA) form a helical membrane-spanning segment. Topologically, residues 72–83 (PADVYRFGASYV) are extracellular. A helical transmembrane segment spans residues 84–104 (IFGVAYTFVVFFTAELFLPVF). Over 105–129 (YRSGITSTYEYLELRFCKLVRVAAT) the chain is Cytoplasmic. A helical membrane pass occupies residues 130 to 150 (LIYIIQTILYTGVVVYAPALA). Residues 151–158 (LNQVTGFD) lie on the Extracellular side of the membrane. Residues 159-179 (LWGSIFATGIVCTFYCTLGGL) form a helical membrane-spanning segment. Over 180 to 181 (KA) the chain is Cytoplasmic. Residues 182–202 (VVWTDAFQMVVMVVGFLTVLI) traverse the membrane as a helical segment. The Extracellular segment spans residues 203–236 (QGSSRAGGIENVWSTSRTGGRLQVFDFDVSPLRR). Residues 237 to 257 (HTFWTLSVGGTFTWLGIYGVN) form a helical membrane-spanning segment. The Cytoplasmic portion of the chain corresponds to 258–276 (QSTIQRCISCKTEGHARWA). Residues 277-297 (LYLNLLGLWIILFCAVVSGLI) form a helical membrane-spanning segment. At 298-322 (MYSYYSHCDPWSSGLISAPDQLMPY) the chain is on the extracellular side. Residues 323–343 (FVMEILGAFPGLPGLFVACAF) form a helical membrane-spanning segment. Over 344-386 (SGTLSTVAASINALATVMYEDFVSQCFPDLSNRAASWISKALC) the chain is Cytoplasmic. The helical transmembrane segment at 387–407 (VAFGVACTTMAVAASYMGGIV) threads the bilayer. Over 408–412 (QAALS) the chain is Extracellular. Residues 413–433 (IHGMCGGPVLGLFSLGILFPF) form a helical membrane-spanning segment. At 434–438 (TNLKG) the chain is on the cytoplasmic side. A helical membrane pass occupies residues 439-459 (AVGGLIVGISLSFWVGVGAFI). The Extracellular segment spans residues 460-510 (YPAPSNNTHALELNTAGCNITAAAFEPTSATVTQLTSDRNWLADSWYSMSY). N465 and N478 each carry an N-linked (GlcNAc...) asparagine glycan. The chain crosses the membrane as a helical span at residues 511-531 (LYYSAVGFIGTVAAGLLITLL). Over 532-623 (TGPMDPKLLK…NETSIVQKKL (92 aa)) the chain is Cytoplasmic.

It belongs to the sodium:solute symporter (SSF) (TC 2.A.21) family.

The protein resides in the apical cell membrane. It catalyses the reaction (S)-lactate(out) + Na(+)(out) = (S)-lactate(in) + Na(+)(in). The catalysed reaction is nicotinate(out) + Na(+)(out) = nicotinate(in) + Na(+)(in). It carries out the reaction pyruvate(out) + Na(+)(out) = pyruvate(in) + Na(+)(in). The enzyme catalyses propanoate(out) + Na(+)(out) = propanoate(in) + Na(+)(in). It catalyses the reaction butanoate(out) + Na(+)(out) = butanoate(in) + Na(+)(in). The catalysed reaction is acetoacetate(out) + Na(+)(out) = acetoacetate(in) + Na(+)(in). Its function is as follows. Acts as an electroneutral and low-affinity sodium (Na(+))-dependent sodium-coupled solute transporter. Catalyzes the transport across the plasma membrane of many monocarboxylates such as lactate, pyruvate, nicotinate, propionate, butyrate and beta-D-hydroxybutyrate. This is Sodium-coupled monocarboxylate transporter 2 (slc5a12) from Danio rerio (Zebrafish).